Reading from the N-terminus, the 222-residue chain is Charged multivesicular body protein 4a (222 aa).

Disordered stretches follow at residues 1-21 (MSGL…TPEE) and 180-211 (VGDK…DEDE). An interaction with phosphoinosides region spans residues 1–116 (MSGLGRLFGK…ELAAQSMKKA (116 aa)). The intramolecular interaction with C-terminus stretch occupies residues 1–150 (MSGLGRLFGK…QISDAISRPM (150 aa)). Coiled coils occupy residues 20 to 105 (EEAI…VLRT) and 155 to 180 (DVDE…LLNV). Positions 151–222 (GFGDDVDEDE…ALKQLAEWVS (72 aa)) are intramolecular interaction with N-terminus. Ser-196 carries the post-translational modification Phosphoserine.

Belongs to the SNF7 family. Probable core component of the endosomal sorting required for transport complex III (ESCRT-III). ESCRT-III components are thought to multimerize to form a flat lattice on the perimeter membrane of the endosome. Several assembly forms of ESCRT-III may exist that interact and act sequentially. Self-associates; overexpression leads to the assembly of filaments that curve and associate to create circular rings. Interacts with CHMP2A. Interacts with CHMP3; the interaction requires the release of CHMP4A autoinhibition. Interacts with CHMP4B. Interacts with CHMP4C. Interacts with CHMP6. Interacts with VPS4A. Interacts with PDCD6IP; the interaction is direct. In terms of tissue distribution, widely expressed. Expressed at higher level in heart, kidney, liver and skeletal muscle. Also expressed in brain, placenta, lung and pancreas.

The protein resides in the cytoplasmic vesicle membrane. It is found in the late endosome membrane. Probable core component of the endosomal sorting required for transport complex III (ESCRT-III) which is involved in multivesicular bodies (MVBs) formation and sorting of endosomal cargo proteins into MVBs. MVBs contain intraluminal vesicles (ILVs) that are generated by invagination and scission from the limiting membrane of the endosome and mostly are delivered to lysosomes enabling degradation of membrane proteins, such as stimulated growth factor receptors, lysosomal enzymes and lipids. The MVB pathway appears to require the sequential function of ESCRT-O, -I,-II and -III complexes. ESCRT-III proteins mostly dissociate from the invaginating membrane before the ILV is released. The ESCRT machinery also functions in topologically equivalent membrane fission events, such as the terminal stages of cytokinesis and the budding of enveloped viruses (HIV-1 and other lentiviruses). ESCRT-III proteins are believed to mediate the necessary vesicle extrusion and/or membrane fission activities, possibly in conjunction with the AAA ATPase VPS4. When overexpressed, membrane-assembled circular arrays of CHMP4A filaments can promote or stabilize negative curvature and outward budding. Via its interaction with PDCD6IP involved in HIV-1 p6- and p9-dependent virus release. CHMP4A/B/C are required for the exosomal release of SDCBP, CD63 and syndecan. The chain is Charged multivesicular body protein 4a (CHMP4A) from Homo sapiens (Human).